The chain runs to 147 residues: Hemoglobin subunit beta (147 aa).

Residues 2 to 147 (DWTDAERAAI…VVSALGRQYH (146 aa)) enclose the Globin domain. Residues H63 and H92 each contribute to the heme b site.

This sequence belongs to the globin family. Heterotetramer of two alpha chains and two beta chains. Red blood cells.

Involved in oxygen transport from gills to the various peripheral tissues. In Leiostomus xanthurus (Spot), this protein is Hemoglobin subunit beta (hbb).